Here is a 183-residue protein sequence, read N- to C-terminus: MVNLRLQVAVVGAPTVGKTAFVQMLHSNGTTFPKNYLMTLGCDFIVKEVPVDDDNTVEMIIFDVSGQREYEPMVSSYLQNTAVFIVMYDVSNKVTFEACARWVNQVRTNSKESVGILIANKSDLSDKAEVTDRQGKDLANANKMKFYKISTLRGVGITEPIDEIARHYVDAYQKRIEQLTQMR.

Residues 12–19 (GAPTVGKT), 63–67 (DVSGQ), and 120–123 (NKSD) each bind GTP.

Belongs to the small GTPase superfamily. Rab family. Component of the IFT complex B.

The protein localises to the cell projection. Its subcellular location is the cilium. It is found in the flagellum. Small GTPase-like component of the intraflagellar transport (IFT) complex B required for both anterograde and retrograde intraflagellar transport. May be involved in cargo loading of the retrograde transport. This Trypanosoma brucei brucei (strain 927/4 GUTat10.1) protein is Intraflagellar transport protein 27 homolog.